A 314-amino-acid polypeptide reads, in one-letter code: L-lactate dehydrogenase 2 (314 aa).

Residues valine 16, aspartate 37, lysine 42, tyrosine 68, and 82–83 (GL) each bind NAD(+). Residues glutamine 85, arginine 91, and 123-126 (NPVD) contribute to the substrate site. Residues 121-123 (ATN) and serine 146 contribute to the NAD(+) site. Residue 151-154 (DSAR) participates in substrate binding. Arginine 156 and histidine 171 together coordinate beta-D-fructose 1,6-bisphosphate. Histidine 178 serves as the catalytic Proton acceptor. Tyrosine 223 is modified (phosphotyrosine). Residue threonine 232 coordinates substrate.

The protein belongs to the LDH/MDH superfamily. LDH family. As to quaternary structure, homotetramer.

The protein resides in the cytoplasm. It catalyses the reaction (S)-lactate + NAD(+) = pyruvate + NADH + H(+). Its pathway is fermentation; pyruvate fermentation to lactate; (S)-lactate from pyruvate: step 1/1. Allosterically activated by fructose 1,6-bisphosphate (FBP). Functionally, catalyzes the conversion of lactate to pyruvate. This chain is L-lactate dehydrogenase 2, found in Bacillus cereus (strain ATCC 10987 / NRS 248).